The chain runs to 206 residues: Oligoribonuclease (206 aa).

One can recognise an Exonuclease domain in the interval 20 to 183; it reads LVWLDMEMTG…ADIHESIDEL (164 aa). Residue Y141 is part of the active site.

Belongs to the oligoribonuclease family.

The protein resides in the cytoplasm. 3'-to-5' exoribonuclease specific for small oligoribonucleotides. In Burkholderia cenocepacia (strain HI2424), this protein is Oligoribonuclease.